The following is a 267-amino-acid chain: GTP cyclohydrolase FolE2 (267 aa).

Belongs to the GTP cyclohydrolase IV family.

It carries out the reaction GTP + H2O = 7,8-dihydroneopterin 3'-triphosphate + formate + H(+). Its pathway is cofactor biosynthesis; 7,8-dihydroneopterin triphosphate biosynthesis; 7,8-dihydroneopterin triphosphate from GTP: step 1/1. Converts GTP to 7,8-dihydroneopterin triphosphate. The polypeptide is GTP cyclohydrolase FolE2 (Nitrosomonas eutropha (strain DSM 101675 / C91 / Nm57)).